We begin with the raw amino-acid sequence, 395 residues long: Multidrug resistance protein MdtL (395 aa).

Residues 1–3 (MKR) lie on the Cytoplasmic side of the membrane. Residues 4-24 (FLLCSFALVLLYPAGIDMYLV) form a helical membrane-spanning segment. The Periplasmic segment spans residues 25-41 (GLPRIAADLNASEAQLH). Residues 42-62 (IAFSVYLAGMATAMLFAGKIA) form a helical membrane-spanning segment. Topologically, residues 63-68 (DQSGRK) are cytoplasmic. The helical transmembrane segment at 69-89 (PVAIVGAIVFMMASLLCSRAS) threads the bilayer. Residues 90-92 (EGS) are Periplasmic-facing. The helical transmembrane segment at 93–113 (LFLSGRFLQGVGAGGCYVVAF) threads the bilayer. Over 114–130 (AILRDTLDEHRRAKVLS) the chain is Cytoplasmic. Residues 131 to 151 (LLNGITCIVPVLAPVMGHLIM) traverse the membrane as a helical segment. At 152 to 157 (LRFPWQ) the chain is on the periplasmic side. Residues 158–178 (SLFYTMSTMGIMVGLLSLFIL) form a helical membrane-spanning segment. Residues 179 to 216 (RETRPARLAPRDLSPSSSAAESLVNRFFVSRLAITTLS) are Cytoplasmic-facing. The chain crosses the membrane as a helical span at residues 217–237 (VSVILTFVNASPVLLMEVMGF). At 238-246 (SRGDYAITM) the chain is on the periplasmic side. Residues 247 to 267 (ALTAGVSMVVSFSTPFALGLF) form a helical membrane-spanning segment. The Cytoplasmic portion of the chain corresponds to 268–270 (KPR). A helical transmembrane segment spans residues 271 to 291 (TLMLVSQGLFLTAGVTLSLAH). Topologically, residues 292–294 (TNT) are periplasmic. Residues 295-315 (VTLFGLTLICAGFSVGFGVAM) traverse the membrane as a helical segment. The Cytoplasmic portion of the chain corresponds to 316 to 332 (SQALGPFSLRAGVASST). Residues 333–353 (LGIAQVCGSSLWIWLAAILGI) traverse the membrane as a helical segment. Over 354–357 (SAMN) the chain is Periplasmic. The chain crosses the membrane as a helical span at residues 358-378 (MLIGILIGCSIVSILLIFSVA). Residues 379-395 (PNRSVAEHEEIPYQSRS) are Cytoplasmic-facing.

This sequence belongs to the major facilitator superfamily. DHA1 family. MdtL (TC 2.A.1.2.22) subfamily.

The protein resides in the cell inner membrane. This Salmonella typhi protein is Multidrug resistance protein MdtL (mdtL).